Reading from the N-terminus, the 497-residue chain is Probable cytosol aminopeptidase (497 aa).

Mn(2+)-binding residues include Lys262 and Asp267. Lys274 is a catalytic residue. Mn(2+) is bound by residues Asp285, Asp344, and Glu346. Arg348 is an active-site residue.

It belongs to the peptidase M17 family. The cofactor is Mn(2+).

It is found in the cytoplasm. The enzyme catalyses Release of an N-terminal amino acid, Xaa-|-Yaa-, in which Xaa is preferably Leu, but may be other amino acids including Pro although not Arg or Lys, and Yaa may be Pro. Amino acid amides and methyl esters are also readily hydrolyzed, but rates on arylamides are exceedingly low.. It catalyses the reaction Release of an N-terminal amino acid, preferentially leucine, but not glutamic or aspartic acids.. Its function is as follows. Presumably involved in the processing and regular turnover of intracellular proteins. Catalyzes the removal of unsubstituted N-terminal amino acids from various peptides. The protein is Probable cytosol aminopeptidase of Rhizobium etli (strain ATCC 51251 / DSM 11541 / JCM 21823 / NBRC 15573 / CFN 42).